We begin with the raw amino-acid sequence, 251 residues long: Imidazole glycerol phosphate synthase subunit HisF (251 aa).

Active-site residues include aspartate 12 and aspartate 131.

It belongs to the HisA/HisF family. Heterodimer of HisH and HisF.

The protein localises to the cytoplasm. It catalyses the reaction 5-[(5-phospho-1-deoxy-D-ribulos-1-ylimino)methylamino]-1-(5-phospho-beta-D-ribosyl)imidazole-4-carboxamide + L-glutamine = D-erythro-1-(imidazol-4-yl)glycerol 3-phosphate + 5-amino-1-(5-phospho-beta-D-ribosyl)imidazole-4-carboxamide + L-glutamate + H(+). It participates in amino-acid biosynthesis; L-histidine biosynthesis; L-histidine from 5-phospho-alpha-D-ribose 1-diphosphate: step 5/9. Its function is as follows. IGPS catalyzes the conversion of PRFAR and glutamine to IGP, AICAR and glutamate. The HisF subunit catalyzes the cyclization activity that produces IGP and AICAR from PRFAR using the ammonia provided by the HisH subunit. This is Imidazole glycerol phosphate synthase subunit HisF from Streptomyces avermitilis (strain ATCC 31267 / DSM 46492 / JCM 5070 / NBRC 14893 / NCIMB 12804 / NRRL 8165 / MA-4680).